Reading from the N-terminus, the 490-residue chain is tRNA-guanine(15) transglycosylase (490 aa).

D90 acts as the Nucleophile in catalysis. Substrate-binding residues include D125 and A193. Zn(2+) is bound by residues C276, C278, and C281.

Belongs to the archaeosine tRNA-ribosyltransferase family. Requires Zn(2+) as cofactor.

The enzyme catalyses guanosine(15) in tRNA + 7-cyano-7-deazaguanine = 7-cyano-7-carbaguanosine(15) in tRNA + guanine. It functions in the pathway tRNA modification; archaeosine-tRNA biosynthesis. In terms of biological role, exchanges the guanine residue with 7-cyano-7-deazaguanine (preQ0) at position 15 in the dihydrouridine loop (D-loop) of archaeal tRNAs. The polypeptide is tRNA-guanine(15) transglycosylase (Methanosarcina acetivorans (strain ATCC 35395 / DSM 2834 / JCM 12185 / C2A)).